A 379-amino-acid polypeptide reads, in one-letter code: tRNA (guanine(26)-N(2))-dimethyltransferase (379 aa).

Positions 4-375 (VEVLEGKAKI…APYEVFVNVL (372 aa)) constitute a Trm1 methyltransferase domain. Residues Arg36, Arg61, Asp78, Asp120, and Ala121 each contribute to the S-adenosyl-L-methionine site.

The protein belongs to the class I-like SAM-binding methyltransferase superfamily. Trm1 family.

The enzyme catalyses guanosine(26) in tRNA + 2 S-adenosyl-L-methionine = N(2)-dimethylguanosine(26) in tRNA + 2 S-adenosyl-L-homocysteine + 2 H(+). In terms of biological role, dimethylates a single guanine residue at position 26 of a number of tRNAs using S-adenosyl-L-methionine as donor of the methyl groups. The polypeptide is tRNA (guanine(26)-N(2))-dimethyltransferase (Pyrococcus abyssi (strain GE5 / Orsay)).